The following is a 291-amino-acid chain: Oxidative stress-responsive serine-rich protein 1 (291 aa).

Positions 29 to 139 (ISLSVGEGPS…NAGENSTSLD (111 aa)) are disordered. A compositionally biased stretch (basic residues) spans 65–83 (STRKSSRGAVRTQRRRRSK). Over residues 95-105 (CSTTAPPSSSQ) the composition is skewed to polar residues. Residue T143 is modified to Phosphothreonine.

The chain is Oxidative stress-responsive serine-rich protein 1 (Oser1) from Mus musculus (Mouse).